A 475-amino-acid polypeptide reads, in one-letter code: Ribulose bisphosphate carboxylase large chain (475 aa).

Positions 1–2 (MS) are excised as a propeptide. Residue Pro-3 is modified to N-acetylproline. Lys-14 is subject to N6,N6,N6-trimethyllysine. Substrate contacts are provided by Asn-123 and Thr-173. Lys-175 serves as the catalytic Proton acceptor. A substrate-binding site is contributed by Lys-177. Mg(2+) is bound by residues Lys-201, Asp-203, and Glu-204. Lys-201 carries the N6-carboxylysine modification. The Proton acceptor role is filled by His-294. Arg-295, His-327, and Ser-379 together coordinate substrate.

It belongs to the RuBisCO large chain family. Type I subfamily. Heterohexadecamer of 8 large chains and 8 small chains; disulfide-linked. The disulfide link is formed within the large subunit homodimers. Mg(2+) is required as a cofactor. In terms of processing, the disulfide bond which can form in the large chain dimeric partners within the hexadecamer appears to be associated with oxidative stress and protein turnover.

It localises to the plastid. The protein resides in the chloroplast. It catalyses the reaction 2 (2R)-3-phosphoglycerate + 2 H(+) = D-ribulose 1,5-bisphosphate + CO2 + H2O. It carries out the reaction D-ribulose 1,5-bisphosphate + O2 = 2-phosphoglycolate + (2R)-3-phosphoglycerate + 2 H(+). Functionally, ruBisCO catalyzes two reactions: the carboxylation of D-ribulose 1,5-bisphosphate, the primary event in carbon dioxide fixation, as well as the oxidative fragmentation of the pentose substrate in the photorespiration process. Both reactions occur simultaneously and in competition at the same active site. This chain is Ribulose bisphosphate carboxylase large chain, found in Cedrus deodara (Deodar cedar).